The following is a 429-amino-acid chain: Fumarylacetoacetase (429 aa).

D139 is a Ca(2+) binding site. H146 functions as the Proton acceptor in the catalytic mechanism. Substrate is bound at residue R155. E212, E214, and D246 together coordinate Ca(2+). Residue D246 participates in Mg(2+) binding. Q253 is a binding site for substrate. Positions 266 and 270 each coordinate Mg(2+). T363 is a binding site for substrate.

It belongs to the FAH family. Requires Ca(2+) as cofactor. Mg(2+) serves as cofactor.

The catalysed reaction is 4-fumarylacetoacetate + H2O = acetoacetate + fumarate + H(+). It participates in amino-acid degradation; L-phenylalanine degradation; acetoacetate and fumarate from L-phenylalanine: step 6/6. Functionally, converts fumarylacetoacetate to acetoacetate and fumarate. Involved in tyrosine catabolic pathway. Catalyzes the final step in the tyrosine degradation pathway. The sequence is that of Fumarylacetoacetase from Oryza sativa subsp. japonica (Rice).